The sequence spans 130 residues: Methylglyoxal synthase (130 aa).

The 130-residue stretch at 1-130 (MSKPRIALIA…DLARNMQDVC (130 aa)) folds into the MGS-like domain. Substrate-binding positions include His11, Lys15, 37 to 40 (TGTT), and 57 to 58 (SG). Asp63 acts as the Proton donor/acceptor in catalysis. His90 is a binding site for substrate.

It belongs to the methylglyoxal synthase family.

The catalysed reaction is dihydroxyacetone phosphate = methylglyoxal + phosphate. Its function is as follows. Catalyzes the formation of methylglyoxal from dihydroxyacetone phosphate. The polypeptide is Methylglyoxal synthase (Burkholderia ambifaria (strain MC40-6)).